The following is a 126-amino-acid chain: MIRTMLQGKLHRVKVTQADLHYEGSCAIDQDFLDASGILENEAIDIWNVTNGKRFSTYAIAAERGSRIISVNGAAAHCAEVGDIVIIASFVTMSDEEARTWRPKVAYFEGDNEMKRTAKAIPVQVA.

Ser-25 (schiff-base intermediate with substrate; via pyruvic acid) is an active-site residue. The residue at position 25 (Ser-25) is a Pyruvic acid (Ser). Thr-57 contributes to the substrate binding site. Tyr-58 acts as the Proton donor in catalysis. 73–75 lines the substrate pocket; the sequence is GAA.

Belongs to the PanD family. Heterooctamer of four alpha and four beta subunits. The cofactor is pyruvate. Is synthesized initially as an inactive proenzyme, which is activated by self-cleavage at a specific serine bond to produce a beta-subunit with a hydroxyl group at its C-terminus and an alpha-subunit with a pyruvoyl group at its N-terminus.

The protein resides in the cytoplasm. The catalysed reaction is L-aspartate + H(+) = beta-alanine + CO2. It functions in the pathway cofactor biosynthesis; (R)-pantothenate biosynthesis; beta-alanine from L-aspartate: step 1/1. In terms of biological role, catalyzes the pyruvoyl-dependent decarboxylation of aspartate to produce beta-alanine. The polypeptide is Aspartate 1-decarboxylase (Salmonella choleraesuis (strain SC-B67)).